The chain runs to 428 residues: Probable protein phosphatase 2C 12 (428 aa).

In terms of domain architecture, PPM-type phosphatase spans 24-293 (KIDNPELIHG…DDTTCIVVDI (270 aa)). Asp-69, Gly-70, Asp-245, and Asp-284 together coordinate Mn(2+). Residues 301–331 (ASVPPPKKQGKGMLKSMFKRKTSDSSSNIEK) form a disordered region.

This sequence belongs to the PP2C family. Mg(2+) is required as a cofactor. It depends on Mn(2+) as a cofactor.

It carries out the reaction O-phospho-L-seryl-[protein] + H2O = L-seryl-[protein] + phosphate. The catalysed reaction is O-phospho-L-threonyl-[protein] + H2O = L-threonyl-[protein] + phosphate. This is Probable protein phosphatase 2C 12 from Arabidopsis thaliana (Mouse-ear cress).